A 339-amino-acid polypeptide reads, in one-letter code: Probable cytosolic iron-sulfur protein assembly protein CIAO1 (339 aa).

WD repeat units follow at residues 14–53, 59–98, 103–142, 148–187, 192–231, 250–289, and 301–339; these read HPDS…WICK, GHQR…FECV, GHEN…EYEC, SHTQ…WVCC, GHES…NEQG, FHTR…DPQQ, and AHSQ…PAGL. An LYR motif; required for interaction with HSC20 motif is present at residues 176–178; that stretch reads LYQ.

Belongs to the WD repeat CIA1 family. As to quaternary structure, component of the CIA complex. Interacts with CIAO2A and forms a complex with CIAO2B and MMS19; the interactions with CIAO2A and CIAO2B are mutually exclusive. Interacts with CHD1L, ERCC2, IREB2 and POLD1. Component of the MMXD complex, which includes CIAO1, ERCC2, CIAO2B, MMS19 and SLC25A5. Interacts with WT1. Interacts with CIAO3. Interacts (via LYR motif) with HSC20.

The protein localises to the cytoplasm. In terms of biological role, key component of the cytosolic iron-sulfur protein assembly (CIA) complex, a multiprotein complex that mediates the incorporation of iron-sulfur cluster into extramitochondrial Fe/S proteins. As a CIA complex component, interacts specifically with CIAO2A or CIAO2B and MMS19 to assist different branches of iron-sulfur protein assembly, depending of its interactors. The complex CIAO1:CIAO2B:MMS19 binds to and facilitates the assembly of most cytosolic-nuclear Fe/S proteins. CIAO1:CIAO2A specifically matures ACO1 and stabilizes IREB2. Seems to specifically modulate the transactivation activity of WT1. As part of the mitotic spindle-associated MMXD complex it may play a role in chromosome segregation. This chain is Probable cytosolic iron-sulfur protein assembly protein CIAO1, found in Mus musculus (Mouse).